We begin with the raw amino-acid sequence, 37 residues long: Ferredoxin--NADP reductase, chloroplastic (37 aa).

Residues Ser-3 and 24-25 contribute to the NADP(+) site; that span reads SR.

It belongs to the ferredoxin--NADP reductase type 1 family. The cofactor is FAD.

It is found in the plastid. The protein localises to the chloroplast stroma. It localises to the chloroplast thylakoid membrane. It carries out the reaction 2 reduced [2Fe-2S]-[ferredoxin] + NADP(+) + H(+) = 2 oxidized [2Fe-2S]-[ferredoxin] + NADPH. The protein operates within energy metabolism; photosynthesis. Its function is as follows. May play a key role in regulating the relative amounts of cyclic and non-cyclic electron flow to meet the demands of the plant for ATP and reducing power. In Imperata cylindrica (Cogon grass), this protein is Ferredoxin--NADP reductase, chloroplastic.